The following is a 763-amino-acid chain: Phosphoglycerol transferase I (763 aa).

4 helical membrane passes run 1 to 21, 26 to 46, 77 to 97, and 108 to 128; these read MSELLSFALFLASVLIYAWKA, WWFAATLTVLGLFVVLNITLF, ILPGIGIVLGLTAVFGALGWI, and FGYSLLALLLALGSVDASPAF.

This sequence belongs to the OpgB family.

It localises to the cell inner membrane. It catalyses the reaction a phosphatidylglycerol + a membrane-derived-oligosaccharide D-glucose = a 1,2-diacyl-sn-glycerol + a membrane-derived-oligosaccharide 6-(glycerophospho)-D-glucose.. It functions in the pathway glycan metabolism; osmoregulated periplasmic glucan (OPG) biosynthesis. Its function is as follows. Transfers a phosphoglycerol residue from phosphatidylglycerol to the membrane-bound nascent glucan backbones. This chain is Phosphoglycerol transferase I, found in Escherichia coli O45:K1 (strain S88 / ExPEC).